Reading from the N-terminus, the 527-residue chain is Triostin synthetase I (527 aa).

187 to 188 (GG) is an ATP binding site. Position 230–231 (230–231 (HQ)) interacts with substrate. ATP-binding positions include 300 to 302 (SAP), Asp406, Arg421, and Lys512. Substrate is bound at residue Lys512.

The protein belongs to the ATP-dependent AMP-binding enzyme family. Monomer.

Involved in triostin biosynthesis. Activates quinoxaline-2-carboxylic acid (QA) via catalysis of the ATP-pyrophosphate exchange reaction dependent on QA, and the formation of the corresponding adenylate. Also activates structural analogs of QA such as quinoline-2-carboxylic acid and thieno[3,2-b]pyridine-5-carboxylic acid, but not quinoline-3-carboxylic acid, quinoline-4-carboxylic acid, pyridine-2-carboxylic acid or 2-pyrazinecarboxylic acid. The protein is Triostin synthetase I (trsA) of Streptomyces triostinicus.